The following is a 118-amino-acid chain: Small ribosomal subunit protein uS13 (118 aa).

The tract at residues valine 97–lysine 118 is disordered.

This sequence belongs to the universal ribosomal protein uS13 family. Part of the 30S ribosomal subunit. Forms a loose heterodimer with protein S19. Forms two bridges to the 50S subunit in the 70S ribosome.

Functionally, located at the top of the head of the 30S subunit, it contacts several helices of the 16S rRNA. In the 70S ribosome it contacts the 23S rRNA (bridge B1a) and protein L5 of the 50S subunit (bridge B1b), connecting the 2 subunits; these bridges are implicated in subunit movement. Contacts the tRNAs in the A and P-sites. The chain is Small ribosomal subunit protein uS13 from Buchnera aphidicola subsp. Schizaphis graminum (strain Sg).